The following is a 167-amino-acid chain: G/U mismatch-specific DNA glycosylase (167 aa).

It belongs to the uracil-DNA glycosylase (UDG) superfamily. TDG/mug family. In terms of assembly, binds DNA as a monomer.

It is found in the cytoplasm. The enzyme catalyses Specifically hydrolyzes mismatched double-stranded DNA and polynucleotides, releasing free uracil.. Functionally, excises ethenocytosine and uracil, which can arise by alkylation or deamination of cytosine, respectively, from the corresponding mispairs with guanine in ds-DNA. It is capable of hydrolyzing the carbon-nitrogen bond between the sugar-phosphate backbone of the DNA and the mispaired base. The complementary strand guanine functions in substrate recognition. Required for DNA damage lesion repair in stationary-phase cells. The polypeptide is G/U mismatch-specific DNA glycosylase (Pectobacterium carotovorum subsp. carotovorum (strain PC1)).